A 443-amino-acid chain; its full sequence is ATP-dependent protease ATPase subunit HslU (443 aa).

Residues Ile20, 62 to 67 (GVGKTE), Asp255, Glu321, and Arg393 each bind ATP.

This sequence belongs to the ClpX chaperone family. HslU subfamily. In terms of assembly, a double ring-shaped homohexamer of HslV is capped on each side by a ring-shaped HslU homohexamer. The assembly of the HslU/HslV complex is dependent on binding of ATP.

The protein resides in the cytoplasm. In terms of biological role, ATPase subunit of a proteasome-like degradation complex; this subunit has chaperone activity. The binding of ATP and its subsequent hydrolysis by HslU are essential for unfolding of protein substrates subsequently hydrolyzed by HslV. HslU recognizes the N-terminal part of its protein substrates and unfolds these before they are guided to HslV for hydrolysis. In Helicobacter pylori (strain G27), this protein is ATP-dependent protease ATPase subunit HslU.